Reading from the N-terminus, the 229-residue chain is uncharacterized protein (229 aa).

This is an uncharacterized protein from Borreliella burgdorferi (strain ATCC 35210 / DSM 4680 / CIP 102532 / B31) (Borrelia burgdorferi).